A 458-amino-acid chain; its full sequence is Glutamyl-tRNA reductase (458 aa).

Residues 49–52 (TCNR), Ser-111, 116–118 (ETE), and Gln-122 contribute to the substrate site. The active-site Nucleophile is Cys-50. NADP(+) is bound at residue 191–196 (GAGKMS). Composition is skewed to basic and acidic residues over residues 426-440 (IPKD…KEVE) and 448-458 (ERGHHESDFHN). A disordered region spans residues 426-458 (IPKDGEEHSSSKEVESVTQSSTERGHHESDFHN).

It belongs to the glutamyl-tRNA reductase family. As to quaternary structure, homodimer.

It carries out the reaction (S)-4-amino-5-oxopentanoate + tRNA(Glu) + NADP(+) = L-glutamyl-tRNA(Glu) + NADPH + H(+). It functions in the pathway porphyrin-containing compound metabolism; protoporphyrin-IX biosynthesis; 5-aminolevulinate from L-glutamyl-tRNA(Glu): step 1/2. Its function is as follows. Catalyzes the NADPH-dependent reduction of glutamyl-tRNA(Glu) to glutamate 1-semialdehyde (GSA). The sequence is that of Glutamyl-tRNA reductase from Natranaerobius thermophilus (strain ATCC BAA-1301 / DSM 18059 / JW/NM-WN-LF).